The primary structure comprises 195 residues: Anthranilate synthase component 2 (195 aa).

A Glutamine amidotransferase type-1 domain is found at 3 to 195; that stretch reads LTLIIDNYDS…KILYNFLNRV (193 aa). An L-glutamine-binding site is contributed by 54–56; the sequence is GPG. The active-site Nucleophile; for GATase activity is cysteine 84. L-glutamine is bound by residues glutamine 88 and 137-138; that span reads SL. Catalysis depends on for GATase activity residues histidine 175 and glutamate 177.

As to quaternary structure, heterotetramer consisting of two non-identical subunits: a beta subunit (TrpG) and a large alpha subunit (TrpE).

It catalyses the reaction chorismate + L-glutamine = anthranilate + pyruvate + L-glutamate + H(+). Its pathway is amino-acid biosynthesis; L-tryptophan biosynthesis; L-tryptophan from chorismate: step 1/5. Part of a heterotetrameric complex that catalyzes the two-step biosynthesis of anthranilate, an intermediate in the biosynthesis of L-tryptophan. In the first step, the glutamine-binding beta subunit (TrpG) of anthranilate synthase (AS) provides the glutamine amidotransferase activity which generates ammonia as a substrate that, along with chorismate, is used in the second step, catalyzed by the large alpha subunit of AS (TrpE) to produce anthranilate. In the absence of TrpG, TrpE can synthesize anthranilate directly from chorismate and high concentrations of ammonia. This Saccharolobus solfataricus (strain ATCC 35092 / DSM 1617 / JCM 11322 / P2) (Sulfolobus solfataricus) protein is Anthranilate synthase component 2 (trpG).